A 146-amino-acid polypeptide reads, in one-letter code: Large ribosomal subunit protein uL15 (146 aa).

A disordered region spans residues 1 to 64 (MQLNTIKPAI…MPMHRRLPKR (64 aa)). The segment covering 30 to 39 (TATKGHKGQK) has biased composition (basic residues).

The protein belongs to the universal ribosomal protein uL15 family. Part of the 50S ribosomal subunit.

In terms of biological role, binds to the 23S rRNA. The polypeptide is Large ribosomal subunit protein uL15 (Geobacter sp. (strain M21)).